We begin with the raw amino-acid sequence, 235 residues long: Thiamine import ATP-binding protein ThiQ (235 aa).

Positions 2–230 constitute an ABC transporter domain; that stretch reads LKLIDITWLY…QASASALLGI (229 aa). ATP is bound at residue 32–39; it reads GPSGAGKS.

Belongs to the ABC transporter superfamily. Thiamine importer (TC 3.A.1.19.1) family. As to quaternary structure, the complex is composed of two ATP-binding proteins (ThiQ), two transmembrane proteins (ThiP) and a solute-binding protein (ThiB).

It localises to the cell inner membrane. It catalyses the reaction thiamine(out) + ATP + H2O = thiamine(in) + ADP + phosphate + H(+). Its function is as follows. Part of the ABC transporter complex ThiBPQ involved in thiamine import. Responsible for energy coupling to the transport system. This chain is Thiamine import ATP-binding protein ThiQ, found in Salmonella choleraesuis (strain SC-B67).